The primary structure comprises 653 residues: Polyadenylate-binding protein, cytoplasmic and nuclear (653 aa).

Over residues 1–10 (MPSTDLKKQA) the composition is skewed to basic and acidic residues. A disordered region spans residues 1–77 (MPSTDLKKQA…SVATPSGTAP (77 aa)). A compositionally biased stretch (polar residues) spans 17–27 (DVNTNNEAVES). The segment covering 53-68 (AAEPSESTSTPTNASS) has biased composition (low complexity). The RRM 1 domain occupies 80–158 (ASLYVGELDP…RPCRIMWSQR (79 aa)). Thr167 is subject to Phosphothreonine. 3 RRM domains span residues 168 to 245 (GNVF…HHVS), 261 to 338 (TNVY…RAQK), and 364 to 441 (VNLF…LAQR). The region spanning 569-646 (PERFTAADLA…AIGVLQEFVD (78 aa)) is the PABC domain.

It belongs to the polyadenylate-binding protein type-1 family. Interacts with cid13.

The protein resides in the cytoplasm. It localises to the nucleus. Its function is as follows. Binds the poly(A) tail of mRNA. Appears to be an important mediator of the multiple roles of the poly(A) tail in mRNA biogenesis, stability and translation. In the nucleus, involved in both mRNA cleavage and polyadenylation. Is also required for efficient mRNA export to the cytoplasm. Acts in concert with a poly(A)-specific nuclease (PAN) to affect poly(A) tail shortening, which may occur concomitantly with either nucleocytoplasmic mRNA transport or translational initiation. In the cytoplasm, stimulates translation initiation and regulates mRNA decay through translation termination-coupled poly(A) shortening, probably mediated by PAN. The polypeptide is Polyadenylate-binding protein, cytoplasmic and nuclear (pab1) (Schizosaccharomyces pombe (strain 972 / ATCC 24843) (Fission yeast)).